The sequence spans 310 residues: MNDIRSRKIAVLMGGLSAEREVSLASGAAVCQALVARGFDALSVDVARDLPLVLSREGIGAAFIALHGRYGEDGCVQGLLELMAIPYTGSGVLASALAMHKLYSKQAFVSAGILTAPFHHFRRGERVSLSHLSFGLPLVVKPVQEGSSVGISIVKEESQLAAAVKLAFRHDDEILVEQFIKGQEVQVGILDDRPMGAIEIVSRNEFYDFEAKYTDGMAEHFFPARLEKGLYEEALRVGLAAHHALGCRCYSRVDLLVTPAGECYVLEVNTLPGMTALSLLPEIAAKGADLPFEELVERIILSADLSVKTG.

In terms of domain architecture, ATP-grasp spans 105 to 301 (KQAFVSAGIL…FEELVERIIL (197 aa)). 133 to 186 (SFGLPLVVKPVQEGSSVGISIVKEESQLAAAVKLAFRHDDEILVEQFIKGQEVQ) serves as a coordination point for ATP. Mg(2+)-binding residues include D254, E267, and N269.

The protein belongs to the D-alanine--D-alanine ligase family. Mg(2+) is required as a cofactor. It depends on Mn(2+) as a cofactor.

It is found in the cytoplasm. The enzyme catalyses 2 D-alanine + ATP = D-alanyl-D-alanine + ADP + phosphate + H(+). Its pathway is cell wall biogenesis; peptidoglycan biosynthesis. Functionally, cell wall formation. The polypeptide is D-alanine--D-alanine ligase (Pelobacter propionicus (strain DSM 2379 / NBRC 103807 / OttBd1)).